Consider the following 998-residue polypeptide: Beta-galactosidase (998 aa).

The Proton donor role is filled by glutamate 431. The active-site Nucleophile is glutamate 508.

It belongs to the glycosyl hydrolase 2 family.

It carries out the reaction Hydrolysis of terminal non-reducing beta-D-galactose residues in beta-D-galactosides.. The sequence is that of Beta-galactosidase (lacZ) from Lactococcus lactis subsp. lactis (strain IL1403) (Streptococcus lactis).